The chain runs to 155 residues: Endoribonuclease YbeY (155 aa).

The segment at 64–84 (SFPMDEMRAPGDDEDPPSGLL) is disordered. Zn(2+) is bound by residues His115, His119, and His125.

The protein belongs to the endoribonuclease YbeY family. Requires Zn(2+) as cofactor.

The protein localises to the cytoplasm. In terms of biological role, single strand-specific metallo-endoribonuclease involved in late-stage 70S ribosome quality control and in maturation of the 3' terminus of the 16S rRNA. The chain is Endoribonuclease YbeY from Cutibacterium acnes (strain DSM 16379 / KPA171202) (Propionibacterium acnes).